The sequence spans 52 residues: DNA import protein CedA2 (52 aa).

2 consecutive transmembrane segments (helical) span residues 1–21 (MKSY…VYIY) and 27–47 (ILVS…IIFE).

In terms of assembly, forms a complex composed of CedA, CedA1 and CedA2.

The protein resides in the cell membrane. In terms of biological role, part of the Ced system, which is involved in DNA import. This Sulfolobus acidocaldarius (strain ATCC 33909 / DSM 639 / JCM 8929 / NBRC 15157 / NCIMB 11770) protein is DNA import protein CedA2.